The chain runs to 308 residues: Glucan 1,3-beta-glucosidase ARB_02797 (308 aa).

An N-terminal signal peptide occupies residues methionine 1–alanine 20. The active-site Proton donor is glutamate 120. A glycan (N-linked (GlcNAc...) asparagine) is linked at asparagine 126. The Nucleophile role is filled by glutamate 220.

The protein belongs to the glycosyl hydrolase 17 family.

It localises to the secreted. It is found in the cell wall. Its subcellular location is the cytoplasm. It catalyses the reaction Successive hydrolysis of beta-D-glucose units from the non-reducing ends of (1-&gt;3)-beta-D-glucans, releasing alpha-glucose.. Functionally, cell wall glucan 1,3-beta-glucosidase involved in cell wall biosynthesis and virulence. Crucial for delivery of beta-1,3-glucan to the biofilm matrix and for accumulation of mature matrix biomass. The protein is Glucan 1,3-beta-glucosidase ARB_02797 of Arthroderma benhamiae (strain ATCC MYA-4681 / CBS 112371) (Trichophyton mentagrophytes).